The primary structure comprises 117 residues: MAAVHLYIISFTALMISSTSEMGGYPKCSVNIEVDLIVGADMVVLIVLTQFQRVITQLPNKCQLIFNASYLPFLFTRTIKISKVERQQGERSKMAMKSKIELKLIHKGSHFYIQLPI.

The first 20 residues, 1 to 20 (MAAVHLYIISFTALMISSTS), serve as a signal peptide directing secretion.

This is an uncharacterized protein from Saccharomyces cerevisiae (strain ATCC 204508 / S288c) (Baker's yeast).